The following is a 405-amino-acid chain: Cytoplasmic tRNA 2-thiolation protein 2 (405 aa).

It belongs to the CTU2/NCS2 family.

It localises to the cytoplasm. The protein operates within tRNA modification; 5-methoxycarbonylmethyl-2-thiouridine-tRNA biosynthesis. In terms of biological role, plays a central role in 2-thiolation of mcm(5)S(2)U at tRNA wobble positions of tRNA(Lys), tRNA(Glu) and tRNA(Gln). May act by forming a heterodimer with NCS6/CTU1 that ligates sulfur from thiocarboxylated URM1 onto the uridine of tRNAs at wobble position. The sequence is that of Cytoplasmic tRNA 2-thiolation protein 2 from Drosophila simulans (Fruit fly).